A 375-amino-acid polypeptide reads, in one-letter code: Probable pectin lyase C (375 aa).

The N-terminal stretch at 1-20 (MKITSTIPAVLLGLAPLSAA) is a signal peptide. 2 cysteine pairs are disulfide-bonded: Cys83-Cys100 and Cys92-Cys220. The active site involves Arg250. Cys317 and Cys325 are oxidised to a cystine.

The protein belongs to the polysaccharide lyase 1 family.

The protein localises to the secreted. It catalyses the reaction Eliminative cleavage of (1-&gt;4)-alpha-D-galacturonan methyl ester to give oligosaccharides with 4-deoxy-6-O-methyl-alpha-D-galact-4-enuronosyl groups at their non-reducing ends.. Pectinolytic enzymes consist of four classes of enzymes: pectin lyase, polygalacturonase, pectin methylesterase and rhamnogalacturonase. Among pectinolytic enzymes, pectin lyase is the most important in depolymerization of pectin, since it cleaves internal glycosidic bonds of highly methylated pectins. This Aspergillus oryzae (strain ATCC 42149 / RIB 40) (Yellow koji mold) protein is Probable pectin lyase C (pelC).